The following is a 218-amino-acid chain: Pyrrolidone-carboxylate peptidase 2 (218 aa).

Active-site residues include glutamate 83, cysteine 146, and histidine 170.

Belongs to the peptidase C15 family. Homotetramer.

Its subcellular location is the cytoplasm. It carries out the reaction Release of an N-terminal pyroglutamyl group from a polypeptide, the second amino acid generally not being Pro.. In terms of biological role, removes 5-oxoproline from various penultimate amino acid residues except L-proline. The protein is Pyrrolidone-carboxylate peptidase 2 of Photorhabdus laumondii subsp. laumondii (strain DSM 15139 / CIP 105565 / TT01) (Photorhabdus luminescens subsp. laumondii).